Consider the following 240-residue polypeptide: EF-hand domain-containing protein D2 (240 aa).

Residues M1–A51 are disordered. An N-acetylalanine modification is found at A2. The residue at position 11 (S11) is a Phosphoserine. Residues A32–A47 are compositionally biased toward low complexity. Residues S74 and S76 each carry the phosphoserine modification. Y83 carries the phosphotyrosine modification. EF-hand domains follow at residues K92–P127 and Q128–G163. Residues D105, D109, E116, D141, D143, D145, K147, and E152 each coordinate Ca(2+). Position 233 is an N6-acetyllysine (K233).

As to quaternary structure, interacts with CASP9; with inactive form. Detected in thymus, kidney, spleen, lung, liver and brain. Highest abundance in brain and lowest in kidney and thymus.

It localises to the membrane raft. Its function is as follows. May regulate B-cell receptor (BCR)-induced immature and primary B-cell apoptosis. Plays a role as negative regulator of the canonical NF-kappa-B-activating branch. Controls spontaneous apoptosis through the regulation of BCL2L1 abundance. The protein is EF-hand domain-containing protein D2 (Efhd2) of Mus musculus (Mouse).